The following is a 365-amino-acid chain: Chorismate synthase (365 aa).

Arg47 is an NADP(+) binding site. FMN is bound by residues 124–126 (RAS), Gly287, 302–306 (KPTAT), and Arg328. The tract at residues 266–290 (FIKSDDSSKLRTTSNNSGGIQGGIS) is disordered.

Belongs to the chorismate synthase family. As to quaternary structure, homotetramer. FMNH2 is required as a cofactor.

The enzyme catalyses 5-O-(1-carboxyvinyl)-3-phosphoshikimate = chorismate + phosphate. Its pathway is metabolic intermediate biosynthesis; chorismate biosynthesis; chorismate from D-erythrose 4-phosphate and phosphoenolpyruvate: step 7/7. Functionally, catalyzes the anti-1,4-elimination of the C-3 phosphate and the C-6 proR hydrogen from 5-enolpyruvylshikimate-3-phosphate (EPSP) to yield chorismate, which is the branch point compound that serves as the starting substrate for the three terminal pathways of aromatic amino acid biosynthesis. This reaction introduces a second double bond into the aromatic ring system. This is Chorismate synthase from Prochlorococcus marinus (strain MIT 9301).